A 346-amino-acid chain; its full sequence is uncharacterized protein (346 aa).

Residue His65 participates in Zn(2+) binding. Asp67 is an active-site residue. Asp89 contacts Zn(2+). Glu115 (proton acceptor) is an active-site residue. Residues Glu116, Glu145, and His319 each coordinate Zn(2+).

This sequence belongs to the peptidase M20A family. Zn(2+) serves as cofactor. It depends on Co(2+) as a cofactor.

This is an uncharacterized protein from Methanocaldococcus jannaschii (strain ATCC 43067 / DSM 2661 / JAL-1 / JCM 10045 / NBRC 100440) (Methanococcus jannaschii).